A 522-amino-acid chain; its full sequence is Signal transduction histidine-protein kinase/phosphatase MprB (522 aa).

Residues M1–L30 are Cytoplasmic-facing. A helical transmembrane segment spans residues L31–I51. The Extracellular segment spans residues S52–R167. A helical membrane pass occupies residues W168–V188. The Cytoplasmic segment spans residues T189–R522. The region spanning R190–E242 is the HAMP domain. A Histidine kinase domain is found at D250–S470. The residue at position 253 (H253) is a Phosphohistidine; by autocatalysis. Residues P467–R522 form a disordered region. Residues T502–R522 show a composition bias toward polar residues.

It depends on Mg(2+) as a cofactor. Mn(2+) serves as cofactor. Autophosphorylated.

The protein localises to the cell membrane. The catalysed reaction is ATP + protein L-histidine = ADP + protein N-phospho-L-histidine.. In terms of biological role, member of the two-component regulatory system MprB/MprA which contributes to maintaining a balance among several systems involved in stress resistance and is required for establishment and maintenance of persistent infection in the host. In response to environmental signals MprB acts both as a membrane-associated protein kinase that undergoes autophosphorylation and subsequently transfers the phosphate to MprA, and a protein phosphatase that dephosphorylates phospho-MprA. The sequence is that of Signal transduction histidine-protein kinase/phosphatase MprB (mprB) from Mycolicibacterium paratuberculosis (strain ATCC BAA-968 / K-10) (Mycobacterium paratuberculosis).